Consider the following 1482-residue polypeptide: Pregnancy zone protein (1482 aa).

A signal peptide spans 1–25; it reads MRKDRLLHLCLVLLLILLSASDSNS. Residues Asn-54, Asn-69, Asn-246, Asn-392, and Asn-406 are each glycosylated (N-linked (GlcNAc...) asparagine). The tract at residues 685-735 is bait region; sequence CSVIPSVSAGAVGQGYYGAGLGVVERPYVPQLGTYNVIPLNNEQSSGPVPE. N-linked (GlcNAc...) asparagine glycosylation is found at Asn-753, Asn-875, and Asn-932. The segment at residues 978–981 is a cross-link (isoglutamyl cysteine thioester (Cys-Gln)); the sequence is CGEQ. N-linked (GlcNAc...) asparagine glycosylation is found at Asn-997 and Asn-1430.

It belongs to the protease inhibitor I39 (alpha-2-macroglobulin) family. In terms of assembly, homotetramer, which consists of two pairs of disulfide-linked chains. Plasma. Prominent constituent of late-pregnancy sera.

Its subcellular location is the secreted. Its function is as follows. Is able to inhibit all four classes of proteinases by a unique 'trapping' mechanism. This protein has a peptide stretch, called the 'bait region' which contains specific cleavage sites for different proteinases. When a proteinase cleaves the bait region, a conformational change is induced in the protein which traps the proteinase. The entrapped enzyme remains active against low molecular weight substrates (activity against high molecular weight substrates is greatly reduced). Following cleavage in the bait region a thioester bond is hydrolyzed and mediates the covalent binding of the protein to the proteinase. The polypeptide is Pregnancy zone protein (PZP) (Homo sapiens (Human)).